The sequence spans 390 residues: S-adenosylmethionine synthase 2 (390 aa).

Residue Glu9 participates in Mg(2+) binding. His15 is an ATP binding site. Residue Glu43 participates in K(+) binding. Residues Glu56 and Gln99 each coordinate L-methionine. ATP is bound by residues Asp167–Lys169, Ser235–Phe238, Asp246, Arg252–Lys253, Ala269, Lys273, and Lys277. Position 246 (Asp246) interacts with L-methionine. Lys277 is an L-methionine binding site.

It belongs to the AdoMet synthase family. Homotetramer. Requires Mn(2+) as cofactor. It depends on Mg(2+) as a cofactor. Co(2+) is required as a cofactor. K(+) serves as cofactor.

The protein localises to the cytoplasm. It carries out the reaction L-methionine + ATP + H2O = S-adenosyl-L-methionine + phosphate + diphosphate. Its pathway is amino-acid biosynthesis; S-adenosyl-L-methionine biosynthesis; S-adenosyl-L-methionine from L-methionine: step 1/1. Its function is as follows. Catalyzes the formation of S-adenosylmethionine from methionine and ATP. The reaction comprises two steps that are both catalyzed by the same enzyme: formation of S-adenosylmethionine (AdoMet) and triphosphate, and subsequent hydrolysis of the triphosphate. The sequence is that of S-adenosylmethionine synthase 2 (SAMS2) from Nicotiana tabacum (Common tobacco).